Here is a 363-residue protein sequence, read N- to C-terminus: DNA replication and repair protein RecF (363 aa).

Residue Gly-30 to Thr-37 participates in ATP binding.

This sequence belongs to the RecF family.

It localises to the cytoplasm. Its function is as follows. The RecF protein is involved in DNA metabolism; it is required for DNA replication and normal SOS inducibility. RecF binds preferentially to single-stranded, linear DNA. It also seems to bind ATP. This is DNA replication and repair protein RecF from Photorhabdus laumondii subsp. laumondii (strain DSM 15139 / CIP 105565 / TT01) (Photorhabdus luminescens subsp. laumondii).